Reading from the N-terminus, the 134-residue chain is Ribonuclease VapC40 (134 aa).

The 124-residue stretch at 3-126 folds into the PINc domain; it reads APDTSVLVAG…LRAVETYERL (124 aa). D5 and D98 together coordinate Mg(2+).

Belongs to the PINc/VapC protein family. Requires Mg(2+) as cofactor.

Its function is as follows. Toxic component of a type II toxin-antitoxin (TA) system. An RNase. Its cognate antitoxin is VapB40. The chain is Ribonuclease VapC40 from Mycobacterium tuberculosis (strain CDC 1551 / Oshkosh).